A 256-amino-acid chain; its full sequence is Phosphatidylglycerol--prolipoprotein diacylglyceryl transferase (256 aa).

3 consecutive transmembrane segments (helical) span residues 19-39, 56-76, and 91-111; these read VHWYGLMYLIGFIGAWLLGYW, LIFYSALGVILGGRVGYMLFY, and IWEGGMSFHGGLLGVVIAAWL. Residue Arg-139 coordinates a 1,2-diacyl-sn-glycero-3-phospho-(1'-sn-glycerol). Residues 231–251 form a helical membrane-spanning segment; the sequence is FGWLTMGQVLSIPMLLIGIWL.

This sequence belongs to the Lgt family.

It localises to the cell inner membrane. It catalyses the reaction L-cysteinyl-[prolipoprotein] + a 1,2-diacyl-sn-glycero-3-phospho-(1'-sn-glycerol) = an S-1,2-diacyl-sn-glyceryl-L-cysteinyl-[prolipoprotein] + sn-glycerol 1-phosphate + H(+). It participates in protein modification; lipoprotein biosynthesis (diacylglyceryl transfer). Catalyzes the transfer of the diacylglyceryl group from phosphatidylglycerol to the sulfhydryl group of the N-terminal cysteine of a prolipoprotein, the first step in the formation of mature lipoproteins. The protein is Phosphatidylglycerol--prolipoprotein diacylglyceryl transferase of Legionella pneumophila (strain Paris).